We begin with the raw amino-acid sequence, 612 residues long: DNA mismatch repair protein MutL (612 aa).

The protein belongs to the DNA mismatch repair MutL/HexB family.

This protein is involved in the repair of mismatches in DNA. It is required for dam-dependent methyl-directed DNA mismatch repair. May act as a 'molecular matchmaker', a protein that promotes the formation of a stable complex between two or more DNA-binding proteins in an ATP-dependent manner without itself being part of a final effector complex. In Herminiimonas arsenicoxydans, this protein is DNA mismatch repair protein MutL.